The sequence spans 400 residues: Homoserine O-acetyltransferase (400 aa).

The segment covering 1–11 (MVKVQSIQSQA) has biased composition (polar residues). Residues 1–24 (MVKVQSIQSQAVHAEERAHEADHP) form a disordered region. The span at 13-23 (HAEERAHEADH) shows a compositional bias: basic and acidic residues. The region spanning 64–373 (NAILVCHALT…TDRGHDAFLL (310 aa)) is the AB hydrolase-1 domain. The Nucleophile role is filled by Ser-169. Arg-239 is a substrate binding site. Catalysis depends on residues Asp-335 and His-368. Residue Asp-369 participates in substrate binding.

The protein belongs to the AB hydrolase superfamily. MetX family. Homodimer.

The protein localises to the cytoplasm. The catalysed reaction is L-homoserine + acetyl-CoA = O-acetyl-L-homoserine + CoA. The protein operates within amino-acid biosynthesis; L-methionine biosynthesis via de novo pathway; O-acetyl-L-homoserine from L-homoserine: step 1/1. Functionally, transfers an acetyl group from acetyl-CoA to L-homoserine, forming acetyl-L-homoserine. This Rhodopseudomonas palustris (strain BisB18) protein is Homoserine O-acetyltransferase.